Here is a 228-residue protein sequence, read N- to C-terminus: Large ribosomal subunit protein uL1 (228 aa).

This sequence belongs to the universal ribosomal protein uL1 family. Part of the 50S ribosomal subunit.

Functionally, binds directly to 23S rRNA. The L1 stalk is quite mobile in the ribosome, and is involved in E site tRNA release. Protein L1 is also a translational repressor protein, it controls the translation of the L11 operon by binding to its mRNA. In Clavibacter sepedonicus (Clavibacter michiganensis subsp. sepedonicus), this protein is Large ribosomal subunit protein uL1.